Reading from the N-terminus, the 124-residue chain is Large ribosomal subunit protein uL29 (124 aa).

Belongs to the universal ribosomal protein uL29 family.

This is Large ribosomal subunit protein uL29 (RPL35) from Triticum aestivum (Wheat).